A 332-amino-acid polypeptide reads, in one-letter code: MNTTGRPVFPLLRRTVLKRCSLCATRCAIVFLCVLLILPFLSCCTSLSRGALPSLISHKERMFWEIRGPQGSVYILGTISVGSEKLLHFQDKILDVFDSASRLYAELGSEDIKNFASVLQRRMLHGMLEQENAAPTLSSLSREELEMLRSTLGDDMHTLSRFEPWVMRVALYQALIAHTKLDSGKNIEAFLYQRAGNRKILGLDSIQKHLNMLSFGNREEQITLLRALIALGKSPADFKGRLGALVRSYLSNDKTALGRVSTELDALVTKDAAGGLHRRYVAEIAASRRAAWAEEFYRLSLQHGITFVFASAGHFCGPESVFDIMRKRRLLQ.

Residues 27-47 form a helical membrane-spanning segment; the sequence is CAIVFLCVLLILPFLSCCTSL.

The protein localises to the membrane. This is an uncharacterized protein from Treponema pallidum (strain Nichols).